Reading from the N-terminus, the 304-residue chain is Bifunctional protein FolD (304 aa).

NADP(+) contacts are provided by residues 170–172 (GRS), serine 195, and isoleucine 236.

It belongs to the tetrahydrofolate dehydrogenase/cyclohydrolase family. Homodimer.

It catalyses the reaction (6R)-5,10-methylene-5,6,7,8-tetrahydrofolate + NADP(+) = (6R)-5,10-methenyltetrahydrofolate + NADPH. The enzyme catalyses (6R)-5,10-methenyltetrahydrofolate + H2O = (6R)-10-formyltetrahydrofolate + H(+). It participates in one-carbon metabolism; tetrahydrofolate interconversion. Catalyzes the oxidation of 5,10-methylenetetrahydrofolate to 5,10-methenyltetrahydrofolate and then the hydrolysis of 5,10-methenyltetrahydrofolate to 10-formyltetrahydrofolate. The chain is Bifunctional protein FolD from Anaplasma phagocytophilum (strain HZ).